A 274-amino-acid polypeptide reads, in one-letter code: 3-methyl-2-oxobutanoate hydroxymethyltransferase (274 aa).

Asp44 and Asp83 together coordinate Mg(2+). 3-methyl-2-oxobutanoate-binding positions include 44-45 (DS), Asp83, and Lys113. Residue Glu115 participates in Mg(2+) binding. The active-site Proton acceptor is Glu182.

The protein belongs to the PanB family. As to quaternary structure, homodecamer; pentamer of dimers. Requires Mg(2+) as cofactor.

The protein resides in the cytoplasm. The enzyme catalyses 3-methyl-2-oxobutanoate + (6R)-5,10-methylene-5,6,7,8-tetrahydrofolate + H2O = 2-dehydropantoate + (6S)-5,6,7,8-tetrahydrofolate. Its pathway is cofactor biosynthesis; (R)-pantothenate biosynthesis; (R)-pantoate from 3-methyl-2-oxobutanoate: step 1/2. Functionally, catalyzes the reversible reaction in which hydroxymethyl group from 5,10-methylenetetrahydrofolate is transferred onto alpha-ketoisovalerate to form ketopantoate. The polypeptide is 3-methyl-2-oxobutanoate hydroxymethyltransferase (Campylobacter jejuni subsp. jejuni serotype O:23/36 (strain 81-176)).